The sequence spans 857 residues: RNA-directed RNA polymerase 2a (857 aa).

In terms of domain architecture, RdRp catalytic spans 511-624 (KYCLEIDLSK…FSQLPPVGDS (114 aa)). A disordered region spans residues 775–857 (RKKHGIERRC…PCERGEGTRA (83 aa)). Polar residues-rich tracts occupy residues 804-816 (KVSQ…TRSQ) and 824-840 (FKSQ…SGRS).

This sequence belongs to the ssRNA positive-strand viruses RNA-directed RNA polymerase family. In terms of assembly, interacts with replication protein 1a.

It carries out the reaction RNA(n) + a ribonucleoside 5'-triphosphate = RNA(n+1) + diphosphate. Functionally, RNA-dependent RNA polymerase which replicates the viral genome composed of 3 RNA segments, RNA1, RNA2 and RNA3. This is RNA-directed RNA polymerase 2a from Cucumber mosaic virus (strain B) (CMV).